A 563-amino-acid polypeptide reads, in one-letter code: Pyruvate decarboxylase isozyme 2 (563 aa).

Pyruvate-binding residues include Asp28, His115, Tyr157, and Arg224. Thiamine diphosphate-binding positions include Thr390 and 413-415 (GSI). Asp444 is a binding site for Mg(2+). Residues 445 to 446 (GS) and 471 to 476 (NNGYTI) each bind thiamine diphosphate. Mg(2+)-binding residues include Asn471 and Gly473. Pyruvate is bound at residue Glu477.

It belongs to the TPP enzyme family. Homotetramer. Requires Mg(2+) as cofactor. The cofactor is thiamine diphosphate.

It is found in the cytoplasm. It localises to the nucleus. The enzyme catalyses pyruvate + H(+) = acetaldehyde + CO2. It catalyses the reaction 3-methyl-2-oxobutanoate + H(+) = 2-methylpropanal + CO2. It carries out the reaction (S)-3-methyl-2-oxopentanoate + H(+) = 2-methylbutanal + CO2. The catalysed reaction is indole-3-pyruvate + H(+) = indole-3-acetaldehyde + CO2. The enzyme catalyses 3-phenylpyruvate + H(+) = 2-phenylacetaldehyde + CO2. It catalyses the reaction 2-oxobutanoate + H(+) = propanal + CO2. It carries out the reaction 2-oxopentanoate + H(+) = butanal + CO2. The catalysed reaction is 2 acetaldehyde = acetoin. The enzyme catalyses acetaldehyde + pyruvate + H(+) = acetoin + CO2. It participates in fermentation; ethanol fermentation. The protein operates within amino-acid degradation; Ehrlich pathway. Allosterically activated by its substrate, pyruvate. Second most abundant of three pyruvate decarboxylases (PDC1, PDC5, PDC6) implicated in the nonoxidative conversion of pyruvate to acetaldehyde and carbon dioxide during alcoholic fermentation. Most of the produced acetaldehyde is subsequently reduced to ethanol, but some is required for cytosolic acetyl-CoA production for biosynthetic pathways. The enzyme is also one of five 2-oxo acid decarboxylases (PDC1, PDC5, PDC6, ARO10, and THI3) able to decarboxylate more complex 2-oxo acids (alpha-keto-acids) than pyruvate, which seem mainly involved in amino acid catabolism. Here the enzyme catalyzes the decarboxylation of amino acids, which, in a first step, have been transaminated to the corresponding 2-oxo acids. In a third step, the resulting aldehydes are reduced to alcohols, collectively referred to as fusel oils or alcohols. Its preferred substrates are the transaminated amino acids derived from threonine (2-oxobutanoate), norvaline (2-oxopentanoate), valine (3-methyl-2-oxobutanoate, also alpha-keto-isovalerate), isoleucine ((3S)-3-methyl-2-oxopentanoate, also alpha-keto-beta-methylvalerate), phenylalanine (phenylpyruvate), and tryptophan (3-(indol-3-yl)pyruvate), whereas transaminated leucine is no substrate. In a side-reaction the carbanionic intermediate (or active aldehyde) generated by decarboxylation or by activation of an aldehyde can react with an aldehyde via condensation (or carboligation) yielding a 2-hydroxy ketone, collectively called acyloins. In Saccharomyces cerevisiae (strain ATCC 204508 / S288c) (Baker's yeast), this protein is Pyruvate decarboxylase isozyme 2 (PDC5).